The chain runs to 476 residues: Probable coniferyl aldehyde dehydrogenase (476 aa).

Catalysis depends on residues Glu225 and Cys259.

Belongs to the aldehyde dehydrogenase family. Homodimer.

It catalyses the reaction (E)-coniferaldehyde + NADP(+) + H2O = (E)-ferulate + NADPH + 2 H(+). The catalysed reaction is (E)-coniferaldehyde + NAD(+) + H2O = (E)-ferulate + NADH + 2 H(+). This chain is Probable coniferyl aldehyde dehydrogenase (calB), found in Pseudomonas aeruginosa (strain ATCC 15692 / DSM 22644 / CIP 104116 / JCM 14847 / LMG 12228 / 1C / PRS 101 / PAO1).